The sequence spans 31 residues: Cyclotide vpub-B (31 aa).

Residues 1–31 (GIIPCGESCVFIPCITSVVGCSCKSKVCYKN) constitute a cross-link (cyclopeptide (Gly-Asn)). Cystine bridges form between C5-C21, C9-C23, and C14-C28.

Belongs to the cyclotide family. Bracelet subfamily. In terms of processing, this is a cyclic peptide.

Functionally, probably participates in a plant defense mechanism. This Viola pubescens (Downy yellow violet) protein is Cyclotide vpub-B.